The following is a 667-amino-acid chain: Probable export ATP-binding/permease protein MacB (667 aa).

In terms of domain architecture, ABC transporter spans 22 to 260 (LRLAGVSRRF…PVEEVQPAAE (239 aa)). 58 to 65 (GASGSGKS) lines the ATP pocket. A run of 4 helical transmembrane segments spans residues 292-312 (LLTM…SAIG), 540-560 (LTLL…IGVM), 601-621 (IGGV…ALFV), and 630-650 (LGSI…FGFV).

The protein belongs to the ABC transporter superfamily. Macrolide exporter (TC 3.A.1.122) family. As to quaternary structure, probably part of a tripartite efflux system, which is composed of an inner membrane transporter, a periplasmic membrane fusion protein, and an outer membrane component.

The protein localises to the cell inner membrane. Probably part of a tripartite efflux system. In Pseudomonas entomophila (strain L48), this protein is Probable export ATP-binding/permease protein MacB.